We begin with the raw amino-acid sequence, 747 residues long: Pseudouridine-metabolizing bifunctional protein C1861.05 (747 aa).

The interval 1–379 (MLIVMNRGCR…KVSDKGVSSS (379 aa)) is pseudouridine-5'-phosphate glycosidase. Glutamate 61 serves as the catalytic Proton donor; for PsiMP glycosidase activity. 2 residues coordinate substrate: lysine 123 and valine 143. Aspartate 175 contacts Mn(2+). 177–179 (SAD) serves as a coordination point for substrate. Lysine 196 functions as the Nucleophile; for PsiMP glycosidase activity in the catalytic mechanism. Residues 380–747 (KKKITETTSK…VNPEIKTLLK (368 aa)) form a pseudouridine kinase region.

This sequence in the N-terminal section; belongs to the pseudouridine-5'-phosphate glycosidase family. In the C-terminal section; belongs to the carbohydrate kinase PfkB family. The cofactor is Mn(2+).

It is found in the cytoplasm. The enzyme catalyses D-ribose 5-phosphate + uracil = psi-UMP + H2O. It catalyses the reaction pseudouridine + ATP = psi-UMP + ADP + H(+). Functionally, bifunctional enzyme that catalyzes the phosphorylation of pseudouridine to pseudouridine 5'-phosphate (PsiMP), and the reversible cleavage of pseudouridine 5'-phosphate to ribose 5-phosphate and uracil. Is involved in a pseudouridine degradation pathway. This chain is Pseudouridine-metabolizing bifunctional protein C1861.05, found in Schizosaccharomyces pombe (strain 972 / ATCC 24843) (Fission yeast).